The primary structure comprises 283 residues: Bifunctional protein FolD (283 aa).

NADP(+)-binding positions include 164 to 166, S189, and I230; that span reads GRS.

It belongs to the tetrahydrofolate dehydrogenase/cyclohydrolase family. As to quaternary structure, homodimer.

It catalyses the reaction (6R)-5,10-methylene-5,6,7,8-tetrahydrofolate + NADP(+) = (6R)-5,10-methenyltetrahydrofolate + NADPH. The catalysed reaction is (6R)-5,10-methenyltetrahydrofolate + H2O = (6R)-10-formyltetrahydrofolate + H(+). Its pathway is one-carbon metabolism; tetrahydrofolate interconversion. Its function is as follows. Catalyzes the oxidation of 5,10-methylenetetrahydrofolate to 5,10-methenyltetrahydrofolate and then the hydrolysis of 5,10-methenyltetrahydrofolate to 10-formyltetrahydrofolate. This is Bifunctional protein FolD from Lacticaseibacillus casei (strain BL23) (Lactobacillus casei).